A 453-amino-acid polypeptide reads, in one-letter code: Putative folate transporter 2 (453 aa).

The next 11 helical transmembrane spans lie at 41–64 (IVVY…YYLF), 76–96 (SLIL…ALIT), 108–126 (PYLF…SLAL), 132–156 (IQAT…EALV), 176–195 (IASK…YFLE), 201–220 (YIFM…CLFL), 241–260 (FINT…YMSG), 280–300 (SFMG…IIVY), 312–330 (TLIF…PIIL), 346–366 (VLSG…PLFI), and 416–437 (LSMY…VPLL).

Belongs to the major facilitator superfamily. Folate-biopterin transporter (TC 2.A.71) family.

Its subcellular location is the plastid. The protein localises to the apicoplast. It localises to the membrane. Putative folate transporter. Required for sporogony of malaria parasites and host switching. This Plasmodium berghei (strain Anka) protein is Putative folate transporter 2.